The following is a 703-amino-acid chain: Lethal(3)malignant brain tumor-like protein 2 (703 aa).

The segment at 1–85 (MEKPRGTEEA…NNRSLDGSGS (85 aa)) is disordered. Residue serine 13 is modified to Phosphoserine. Residues 15-25 (PMEEEEEDDLD) show a composition bias toward acidic residues. Low complexity predominate over residues 35-49 (SYNSSAGSESSSYLE). A compositionally biased stretch (acidic residues) spans 50-60 (ESSEAENEDRE). Position 67 is a phosphoserine (serine 67). Residues 73-82 (SSANNRSLDG) show a composition bias toward polar residues. The FCS-type zinc-finger motif lies at 81–116 (DGSGSEPAVCEMCGIVGTREAFFSKTKRFCSVSCSR). Zn(2+) contacts are provided by cysteine 90, cysteine 93, cysteine 110, and cysteine 114. MBT repeat units follow at residues 179-283 (FDWG…LVPP), 291-391 (TDWK…IKMS), 397-500 (MSHH…LTPP), and 508-604 (FAWE…LQPP). The residue at position 338 (serine 338) is a Phosphoserine. Lysine 405 participates in a covalent cross-link: Glycyl lysine isopeptide (Lys-Gly) (interchain with G-Cter in SUMO2). Residues 604–649 (PVSAEPNTPQKGKDTTKKKKKQFGKKRKRIPSAKTRPLRQGSKKPL) form a disordered region. Residues 619–634 (TKKKKKQFGKKRKRIP) show a composition bias toward basic residues. Glycyl lysine isopeptide (Lys-Gly) (interchain with G-Cter in SUMO2) cross-links involve residues lysine 647 and lysine 673. The tract at residues 675–703 (EHQDISSLDRSPSPQLPLPIESIKQERNN) is disordered. Phosphoserine is present on residues serine 681, serine 685, and serine 687. Residue lysine 698 forms a Glycyl lysine isopeptide (Lys-Gly) (interchain with G-Cter in SUMO1); alternate linkage. Residue lysine 698 forms a Glycyl lysine isopeptide (Lys-Gly) (interchain with G-Cter in SUMO2); alternate linkage.

As to quaternary structure, part of the E2F6.com-1 complex in G0 phase composed of E2F6, MGA, MAX, TFDP1, CBX3, BAT8, EUHMTASE1, RING1, RNF2, MBLR, BAT8 and YAF2. Post-translationally, phosphorylated. In terms of tissue distribution, ubiquitous.

The protein localises to the nucleus. In terms of biological role, putative Polycomb group (PcG) protein. PcG proteins maintain the transcriptionally repressive state of genes, probably via a modification of chromatin, rendering it heritably changed in its expressibility. Its association with a chromatin-remodeling complex suggests that it may contribute to prevent expression of genes that trigger the cell into mitosis. Binds to monomethylated and dimethylated 'Lys-20' on histone H4. Binds histone H3 peptides that are monomethylated or dimethylated on 'Lys-4', 'Lys-9' or 'Lys-27'. The sequence is that of Lethal(3)malignant brain tumor-like protein 2 (L3mbtl2) from Mus musculus (Mouse).